The primary structure comprises 347 residues: Phenylalanine--tRNA ligase alpha subunit (347 aa).

Glu261 provides a ligand contact to Mg(2+).

Belongs to the class-II aminoacyl-tRNA synthetase family. Phe-tRNA synthetase alpha subunit type 1 subfamily. Tetramer of two alpha and two beta subunits. Mg(2+) serves as cofactor.

The protein localises to the cytoplasm. It catalyses the reaction tRNA(Phe) + L-phenylalanine + ATP = L-phenylalanyl-tRNA(Phe) + AMP + diphosphate + H(+). The protein is Phenylalanine--tRNA ligase alpha subunit of Streptococcus pyogenes serotype M1.